The following is a 359-amino-acid chain: Probable RNA methyltransferase RPD_2859 (359 aa).

Catalysis depends on Glu-99, which acts as the Proton acceptor. The 226-residue stretch at 105–330 (RFDGHTACIS…PVVVRDTQGR (226 aa)) folds into the Radical SAM core domain. Cys-112 and Cys-336 are disulfide-bonded. [4Fe-4S] cluster contacts are provided by Cys-119, Cys-123, and Cys-126. Residues 162-163 (GE), Ser-194, 217-219 (SLH), and Asn-293 contribute to the S-adenosyl-L-methionine site. The active-site S-methylcysteine intermediate is the Cys-336.

The protein belongs to the radical SAM superfamily. RlmN family. Requires [4Fe-4S] cluster as cofactor.

It localises to the cytoplasm. This chain is Probable RNA methyltransferase RPD_2859, found in Rhodopseudomonas palustris (strain BisB5).